The sequence spans 267 residues: Tryptophan synthase alpha chain (267 aa).

Catalysis depends on proton acceptor residues Glu49 and Asp60.

It belongs to the TrpA family. As to quaternary structure, tetramer of two alpha and two beta chains.

It carries out the reaction (1S,2R)-1-C-(indol-3-yl)glycerol 3-phosphate + L-serine = D-glyceraldehyde 3-phosphate + L-tryptophan + H2O. Its pathway is amino-acid biosynthesis; L-tryptophan biosynthesis; L-tryptophan from chorismate: step 5/5. In terms of biological role, the alpha subunit is responsible for the aldol cleavage of indoleglycerol phosphate to indole and glyceraldehyde 3-phosphate. The protein is Tryptophan synthase alpha chain of Acidothermus cellulolyticus (strain ATCC 43068 / DSM 8971 / 11B).